A 166-amino-acid chain; its full sequence is Ribosome maturation factor RimM (166 aa).

The PRC barrel domain occupies 94–166 (GDEYYWRDLM…EMVVRLLPGL (73 aa)).

It belongs to the RimM family. Binds ribosomal protein uS19.

It localises to the cytoplasm. Functionally, an accessory protein needed during the final step in the assembly of 30S ribosomal subunit, possibly for assembly of the head region. Essential for efficient processing of 16S rRNA. May be needed both before and after RbfA during the maturation of 16S rRNA. It has affinity for free ribosomal 30S subunits but not for 70S ribosomes. The protein is Ribosome maturation factor RimM of Syntrophus aciditrophicus (strain SB).